The sequence spans 162 residues: Shikimate kinase (162 aa).

Residue 11–16 (GSGKSS) participates in ATP binding. Residue Ser-15 participates in Mg(2+) binding. Substrate contacts are provided by Asp-33, Arg-57, and Gly-80. Arg-116 contacts ATP. Arg-132 is a binding site for substrate.

It belongs to the shikimate kinase family. Monomer. Mg(2+) is required as a cofactor.

The protein resides in the cytoplasm. The catalysed reaction is shikimate + ATP = 3-phosphoshikimate + ADP + H(+). The protein operates within metabolic intermediate biosynthesis; chorismate biosynthesis; chorismate from D-erythrose 4-phosphate and phosphoenolpyruvate: step 5/7. In terms of biological role, catalyzes the specific phosphorylation of the 3-hydroxyl group of shikimic acid using ATP as a cosubstrate. This is Shikimate kinase from Helicobacter acinonychis (strain Sheeba).